Consider the following 1266-residue polypeptide: Rho GTPase-activating protein 29 (1266 aa).

Phosphoserine is present on residues serine 166, serine 171, serine 174, and serine 185. An F-BAR domain is found at 187–457 (IELDNLLLKN…SAKLYDPGQE (271 aa)). Positions 291–413 (RKNEMEKQRK…EILTQLRTLV (123 aa)) form a coiled coil. Serine 496, serine 516, and serine 549 each carry phosphoserine. Over residues 538 to 556 (SESTGGSSESRSLDSESIS) the composition is skewed to low complexity. Residues 538–596 (SESTGGSSESRSLDSESISPGDFHRKLPRTPSSGTMSSADDLDEREPPSPSEAGPNSLG) are disordered. A Phorbol-ester/DAG-type zinc finger spans residues 609–654 (THKFRKLRSPTKCRDCEGIVMFPGVECEECLLVCHRKCLENLVIVC). The 216-residue stretch at 668 to 883 (AEFIQVAKKE…FLITYAQKIF (216 aa)) folds into the Rho-GAP domain. Phosphoserine occurs at positions 915, 951, and 1023. Disordered regions lie at residues 1033–1054 (AGSP…KFGK), 1114–1153 (VSTG…DSCP), and 1222–1248 (VQTS…QRPR). Positions 1115-1127 (STGNNRGHSSGAA) are enriched in polar residues. A compositionally biased stretch (basic and acidic residues) spans 1132-1148 (AHADPARSARDTSEHSS). Serine 1149 and serine 1151 each carry phosphoserine. Residues 1263 to 1266 (PQFV) form an interaction with PTPN13/PTPL1 region.

In terms of assembly, interacts with PTPN13/PTPL1. Interacts with RAP2A via its coiled coil domain. Interacts with RASIP1.

Its function is as follows. GTPase activator for the Rho-type GTPases by converting them to an inactive GDP-bound state. Has strong activity toward RHOA, and weaker activity toward RAC1 and CDC42. May act as a specific effector of RAP2A to regulate Rho. In concert with RASIP1, suppresses RhoA signaling and dampens ROCK and MYH9 activities in endothelial cells and plays an essential role in blood vessel tubulogenesis. In Rattus norvegicus (Rat), this protein is Rho GTPase-activating protein 29 (Arhgap29).